The following is a 494-amino-acid chain: NADPH:adrenodoxin oxidoreductase, mitochondrial (494 aa).

The transit peptide at 1-34 (MAPRCWHWWRWSAWSGLRPSPSRSTPTPGFCQKF) directs the protein to the mitochondrion. FAD-binding residues include Ala51, Glu72, Leu80, and Val116. NADP(+)-binding positions include 187–190 (QGNV), 231–232 (RR), and Glu243. A Phosphoserine modification is found at Ser313. FAD contacts are provided by residues Trp401 and 408–410 (GVI). Gly408 serves as a coordination point for NADP(+).

The protein belongs to the ferredoxin--NADP reductase type 1 family. Monomer. Interacts directly with FDX1. FAD is required as a cofactor. As to expression, expressed in the adrenal, testis and ovary and to a lesser extent in the liver and kidney.

Its subcellular location is the mitochondrion inner membrane. The enzyme catalyses 2 reduced [adrenodoxin] + NADP(+) + H(+) = 2 oxidized [adrenodoxin] + NADPH. It carries out the reaction 2 reduced [2Fe-2S]-[ferredoxin] + NADP(+) + H(+) = 2 oxidized [2Fe-2S]-[ferredoxin] + NADPH. The protein operates within steroid metabolism; cholesterol metabolism. Functionally, serves as the first electron transfer protein in all the mitochondrial P450 systems including cholesterol side chain cleavage in all steroidogenic tissues, steroid 11-beta hydroxylation in the adrenal cortex, 25-OH-vitamin D3-24 hydroxylation in the kidney, and sterol C-27 hydroxylation in the liver. Also acts as a ferredoxin--NADP(+) reductase essential for coenzyme Q biosynthesis: together with FDX2, transfers the electrons required for the hydroxylation reaction performed by COQ6. The sequence is that of NADPH:adrenodoxin oxidoreductase, mitochondrial (Fdxr) from Mus musculus (Mouse).